Reading from the N-terminus, the 422-residue chain is Adenosylhomocysteinase (422 aa).

Substrate is bound by residues Asp-129 and Glu-154. 155 to 157 (TTT) is an NAD(+) binding site. Lys-184 and Asp-188 together coordinate substrate. NAD(+) contacts are provided by residues Asn-189, 218–223 (GYGWCG), Glu-241, Asn-276, 297–299 (AGH), and Asn-344.

It belongs to the adenosylhomocysteinase family. Requires NAD(+) as cofactor.

It is found in the cytoplasm. The enzyme catalyses S-adenosyl-L-homocysteine + H2O = L-homocysteine + adenosine. The protein operates within amino-acid biosynthesis; L-homocysteine biosynthesis; L-homocysteine from S-adenosyl-L-homocysteine: step 1/1. Its function is as follows. May play a key role in the regulation of the intracellular concentration of adenosylhomocysteine. This is Adenosylhomocysteinase from Pyrococcus abyssi (strain GE5 / Orsay).